We begin with the raw amino-acid sequence, 345 residues long: S-adenosylmethionine:tRNA ribosyltransferase-isomerase (345 aa).

This sequence belongs to the QueA family. As to quaternary structure, monomer.

Its subcellular location is the cytoplasm. It carries out the reaction 7-aminomethyl-7-carbaguanosine(34) in tRNA + S-adenosyl-L-methionine = epoxyqueuosine(34) in tRNA + adenine + L-methionine + 2 H(+). Its pathway is tRNA modification; tRNA-queuosine biosynthesis. In terms of biological role, transfers and isomerizes the ribose moiety from AdoMet to the 7-aminomethyl group of 7-deazaguanine (preQ1-tRNA) to give epoxyqueuosine (oQ-tRNA). The polypeptide is S-adenosylmethionine:tRNA ribosyltransferase-isomerase (Anaeromyxobacter dehalogenans (strain 2CP-C)).